The sequence spans 316 residues: Chorismate mutase 3, chloroplastic (316 aa).

The N-terminal 47 residues, 1-47, are a transit peptide targeting the chloroplast; that stretch reads MEAKLLKPAFYNSPNLNLTNSSRLISRLSIWNDKSKVGLSSGSLFLR. R62 serves as a coordination point for L-phenylalanine. Residues 62-316 enclose the Chorismate mutase domain; sequence RVDESEYLKL…QIEYLLRRLD (255 aa). Residues R133 and 194–197 contribute to the L-tyrosine site; that span reads NCGS. Residue 194–197 coordinates L-phenylalanine; sequence NCGS.

Homodimer. Expressed in roots, stems, cauline leaves, flowers and siliques, and at lower levels in rosette leaves.

Its subcellular location is the plastid. It is found in the chloroplast. It carries out the reaction chorismate = prephenate. The protein operates within metabolic intermediate biosynthesis; prephenate biosynthesis; prephenate from chorismate: step 1/1. Its activity is regulated as follows. Allosterically inhibited by tyrosine and phenylalanine. According to another report, seems not to be repressed by tyrosine and phenylalanine. Activated by tryptophan, cysteine and histidine. In terms of biological role, may play a role in chloroplast biogenesis. In Arabidopsis thaliana (Mouse-ear cress), this protein is Chorismate mutase 3, chloroplastic.